The following is a 1182-amino-acid chain: Receptor-type guanylate cyclase gcy-19 (1182 aa).

Positions 1–24 (MEYLLFLLLFAGFLTFLPRFLIYA) are cleaved as a signal peptide. At 25-507 (QITSSTTTTT…PQSFVDQYGA (483 aa)) the chain is on the extracellular side. N-linked (GlcNAc...) asparagine glycans are attached at residues Asn91, Asn369, Asn430, and Asn453. The chain crosses the membrane as a helical span at residues 508–528 (LVFAIGGVLIFAMLFVITCFF). At 529-1182 (YVMRQKRLER…FRRQETLALI (654 aa)) the chain is on the cytoplasmic side. A Protein kinase domain is found at 562 to 849 (RMSKRSLQSG…KGNLMDHVFN (288 aa)). The Guanylate cyclase domain occupies 907–1037 (TVFFSDVVKF…DTVNTASRME (131 aa)). The tract at residues 1094-1164 (VSSNSGYQSD…EAKARDIHNE (71 aa)) is disordered. Positions 1142–1152 (SPTLSKRSVSP) are enriched in low complexity.

Belongs to the adenylyl cyclase class-4/guanylyl cyclase family. In terms of tissue distribution, expressed in IL2 sensory neurons.

Its subcellular location is the cell membrane. The enzyme catalyses GTP = 3',5'-cyclic GMP + diphosphate. Functionally, guanylate cyclase involved in the production of the second messenger cGMP. This is Receptor-type guanylate cyclase gcy-19 from Caenorhabditis elegans.